A 494-amino-acid polypeptide reads, in one-letter code: mRNA decay activator protein ZFP36L2 (494 aa).

At Ser57 the chain carries Phosphoserine. Residues 93-113 (GGPTSYGTLKEPSGGGGTALL) are disordered. Ser125 bears the Phosphoserine mark. Positions 153-158 (RYKTEL) match the RNA-binding motif. C3H1-type zinc fingers lie at residues 153–181 (RYKTELCRPFEESGTCKYGEKCQFAHGFH) and 191–219 (KYKTELCRTFHTIGFCPYGPRCHFIHNAD). Positions 170-211 (YGEKCQFAHGFHELRSLTRHPKYKTELCRTFHTIGFCPYGPR) are RNA-binding. At Thr238 the chain carries Phosphothreonine. Disordered regions lie at residues 257 to 293 (SLSFSGFPSGHHQPPGGLESPLLLDSPTSRTPPPPSC) and 397 to 494 (QQQQ…ISDD). Residues 406–415 (PAQPPAPPSA) show a composition bias toward pro residues. Low complexity-rich tracts occupy residues 416–435 (TLPAGAAAPPSPPFSFQLPR) and 459–478 (YLSGSLSSGSLSGSESPSLD). Residues Ser490 and Ser492 each carry the phosphoserine; by RPS6KA1 modification.

As to quaternary structure, associates with the cytoplasmic CCR4-NOT deadenylase to trigger ARE-containing mRNA deadenylation and decay processes. Interacts with CNOT7; this interaction is inhibited in response to phorbol 12-myristate 13-acetate (PMA) treatment in a p38 MAPK-dependent manner. Interacts with CNOT6L. Phosphorylated by RPS6KA1 at Ser-490 and Ser-492 upon phorbol 12-myristate 13-acetate (PMA) treatment; this phosphorylation results in dissociation of the CCR4-NOT-deadenylase complex and induces p38 MAPK-mediated stabilization of the low-density lipoprotein (LDL) receptor (LDLR) mRNA. Phosphorylation occurs during early preadipocyte differentiation. Expressed mainly in the basal epidermal layer, weakly in the suprabasal epidermal layers. Expressed in epidermal keratinocytes (at protein level). Expressed in oocytes.

It localises to the nucleus. It is found in the cytoplasm. Its function is as follows. Zinc-finger RNA-binding protein that destabilizes several cytoplasmic AU-rich element (ARE)-containing mRNA transcripts by promoting their poly(A) tail removal or deadenylation, and hence provide a mechanism for attenuating protein synthesis. Acts as a 3'-untranslated region (UTR) ARE mRNA-binding adapter protein to communicate signaling events to the mRNA decay machinery. Functions by recruiting the CCR4-NOT deadenylase complex and probably other components of the cytoplasmic RNA decay machinery to the bound ARE-containing mRNAs, and hence promotes ARE-mediated mRNA deadenylation and decay processes. Binds to 3'-UTR ARE of numerous mRNAs. Promotes ARE-containing mRNA decay of the low-density lipoprotein (LDL) receptor (LDLR) mRNA in response to phorbol 12-myristate 13-acetate (PMA) treatment in a p38 MAPK-dependent manner. Positively regulates early adipogenesis by promoting ARE-mediated mRNA decay of immediate early genes (IEGs). Plays a role in mature peripheral neuron integrity by promoting ARE-containing mRNA decay of the transcriptional repressor REST mRNA. Plays a role in ovulation and oocyte meiotic maturation by promoting ARE-mediated mRNA decay of the luteinizing hormone receptor LHCGR mRNA. Acts as a negative regulator of erythroid cell differentiation: promotes glucocorticoid-induced self-renewal of erythroid cells by binding mRNAs that are induced or highly expressed during terminal erythroid differentiation and promotes their degradation, preventing erythroid cell differentiation. In association with ZFP36L1 maintains quiescence on developing B lymphocytes by promoting ARE-mediated decay of several mRNAs encoding cell cycle regulators that help B cells progress through the cell cycle, and hence ensuring accurate variable-diversity-joining (VDJ) recombination process and functional immune cell formation. Together with ZFP36L1 is also necessary for thymocyte development and prevention of T-cell acute lymphoblastic leukemia (T-ALL) transformation by promoting ARE-mediated mRNA decay of the oncogenic transcription factor NOTCH1 mRNA. This Homo sapiens (Human) protein is mRNA decay activator protein ZFP36L2.